The chain runs to 170 residues: ATP synthase subunit b (170 aa).

A helical transmembrane segment spans residues 4–24 (ILLLGLALAPVALFASQGAVE).

The protein belongs to the ATPase B chain family. As to quaternary structure, F-type ATPases have 2 components, F(1) - the catalytic core - and F(0) - the membrane proton channel. F(1) has five subunits: alpha(3), beta(3), gamma(1), delta(1), epsilon(1). F(0) has three main subunits: a(1), b(2) and c(10-14). The alpha and beta chains form an alternating ring which encloses part of the gamma chain. F(1) is attached to F(0) by a central stalk formed by the gamma and epsilon chains, while a peripheral stalk is formed by the delta and b chains.

It localises to the cell inner membrane. Its function is as follows. F(1)F(0) ATP synthase produces ATP from ADP in the presence of a proton or sodium gradient. F-type ATPases consist of two structural domains, F(1) containing the extramembraneous catalytic core and F(0) containing the membrane proton channel, linked together by a central stalk and a peripheral stalk. During catalysis, ATP synthesis in the catalytic domain of F(1) is coupled via a rotary mechanism of the central stalk subunits to proton translocation. Functionally, component of the F(0) channel, it forms part of the peripheral stalk, linking F(1) to F(0). This is ATP synthase subunit b from Aliarcobacter butzleri (strain RM4018) (Arcobacter butzleri).